The chain runs to 434 residues: Nucleobase transporter PlUacP (434 aa).

The next 12 membrane-spanning stretches (helical) occupy residues 9–29 (LGFQ…LIVG), 39–59 (LAYL…LQVW), 63–83 (FFGI…GPMI), 93–113 (AIYG…GFFG), 118–138 (FFPP…LIPV), 159–179 (ALSF…TGFI), 181–201 (AISI…MGKV), 218–238 (FYFG…LVAI), 306–326 (VVIT…IAAL), 327–347 (TLLI…GMVV), 365–385 (LLII…PNLF), and 394–414 (ILTS…NFLF).

This sequence belongs to the nucleobase:cation symporter-2 (NCS2) (TC 2.A.40) family.

The protein resides in the cell membrane. Its activity is regulated as follows. Inhibited by the proton gradient disruptor carbonyl cyanide m-chlorophenylhydrazone (CCCP), but not by the sodium gradient disruptor ouabain. Hypoxanthine, xanthine, cytosine and uric acid act as competitive inhibitors. Functionally, uptake of the purines adenine and guanine, and the pyrimidine uracil. Transport is probably proton-dependent. The chain is Nucleobase transporter PlUacP from Paenibacillus larvae subsp. larvae (strain NRRL B-3650 / LMG 16245).